Consider the following 374-residue polypeptide: MTAAIQRRLDLSEPPALAQRTELHPELNRAHVRFVGLGKTYDGKQGTVAALQGIDLAIQRGEVFGIIGRSGAGKSSLIRTINRLEQPTSGRVLIDQVDIGEYDEDRLVALRRRIGMIFQHFNLMSAKTVWQNVELPLKVAGVPKEQREKKVRELLELVGLQAKHTAYPAQLSGGQKQRVGIARALVHDPDILLCDEATSALDPETTQSILGLLREINKRLGLTIMLITHEMAVIREICDRVVVLEHGRIVEQGPVWEVFGNPQHEVSQTLLAPLQHALPEELQSRLQVQPSSSDASVVLRLQFTGSQQDEPDLAALFAALGGRVKLLQGGVERIQGHALGQLLLAVAGSQLNAEQLRERAGQWAQRTEVLGYVV.

An ABC transporter domain is found at 32–271 (VRFVGLGKTY…PQHEVSQTLL (240 aa)). 68–75 (GRSGAGKS) contributes to the ATP binding site.

Belongs to the ABC transporter superfamily. Methionine importer (TC 3.A.1.24) family. As to quaternary structure, the complex is composed of two ATP-binding proteins (MetN), two transmembrane proteins (MetI) and a solute-binding protein (MetQ).

It is found in the cell inner membrane. The enzyme catalyses L-methionine(out) + ATP + H2O = L-methionine(in) + ADP + phosphate + H(+). It catalyses the reaction D-methionine(out) + ATP + H2O = D-methionine(in) + ADP + phosphate + H(+). In terms of biological role, part of the ABC transporter complex MetNIQ involved in methionine import. Responsible for energy coupling to the transport system. The protein is Methionine import ATP-binding protein MetN 2 of Pseudomonas fluorescens (strain Pf0-1).